The primary structure comprises 172 residues: MWTVPVLFWVLGSVWFWDSAQGGTIGVNEDDIVTPGTGDGMVPPGIEDKITTTGATGGLNESTGKAPLVPTQRERGTKPPLEELSTSATSDHDHREHESTTTVKVVTSHSVDKKTSHPNRDNAGDETQTTDKKDGLPVVTLVGIIVGVLLAIGFVGGIFIVVMKKISGRFSP.

The first 22 residues, 1–22 (MWTVPVLFWVLGSVWFWDSAQG), serve as a signal peptide directing secretion. The Extracellular portion of the chain corresponds to 23–141 (GTIGVNEDDI…KKDGLPVVTL (119 aa)). Residues T37, T51, T52, T53, and T56 are each glycosylated (O-linked (GalNAc...) threonine). A disordered region spans residues 49-132 (KITTTGATGG…AGDETQTTDK (84 aa)). The span at 51–63 (TTTGATGGLNEST) shows a compositional bias: polar residues. A glycan (N-linked (GlcNAc...) asparagine) is linked at N60. T63, T71, and T77 each carry an O-linked (GalNAc...) threonine glycan. Residues 72–81 (QRERGTKPPL) are compositionally biased toward basic and acidic residues. S85 carries an O-linked (GalNAc...) serine glycan. T86 carries an O-linked (GalNAc...) threonine glycan. An O-linked (GalNAc...) serine glycan is attached at S87. Residue T89 is glycosylated (O-linked (GalNAc...) threonine). S90 carries O-linked (GalNAc...) serine glycosylation. Residues 90-99 (SDHDHREHES) show a composition bias toward basic and acidic residues. T100, T101, T102, T107, and T115 each carry an O-linked (GalNAc...) threonine glycan. Residues 100 to 109 (TTTVKVVTSH) are compositionally biased toward low complexity. The segment covering 110 to 132 (SVDKKTSHPNRDNAGDETQTTDK) has biased composition (basic and acidic residues). Residues 142–162 (VGIIVGVLLAIGFVGGIFIVV) form a helical membrane-spanning segment. The segment at 143–147 (GIIVG) is requires for dimerization and lipidd rafts association. Topologically, residues 163–172 (MKKISGRFSP) are cytoplasmic. The tract at residues 164–165 (KK) is requires for interaction with MSN and EZR.

It belongs to the podoplanin family. In terms of assembly, homodimer. Interacts with CLEC1B; the interaction is independent of CLEC1B glycosylation and activates CLEC1B; the interaction is dependent of sialic acid on O-glycans. Interacts with CD9; this interaction is homophilic and attenuates platelet aggregation and pulmonary metastasis induced by PDPN. Interacts with LGALS8; the interaction is glycosylation-dependent; may participate in connection of the lymphatic endothelium to the surrounding extracellular matrix. Interacts with HSPA9. Interacts (via extracellular domain) with CD44; this interaction is required for PDPN-mediated directional migration and regulation of lamellipodia extension/stabilization during cell spreading and migration. Interacts (via cytoplasmic domain) with MSN and EZR; activates RHOA and promotes epithelial-mesenchymal transition. Interacts with CCL21; relocalized PDPN to the basolateral membrane. In terms of processing, extensively O-glycosylated. Contains sialic acid residues. O-glycosylation is necessary for platelet aggregation activity. Disialylated at Thr-52; sialic acid is critical for platelet-aggregating activity and for CLEC1B interaction. Post-translationally, phosphorylated by PKA; decreases cell migration. The N-terminus is blocked. Detected at high levels in lung and brain, at lower levels in kidney, stomach, liver, spleen and esophagus, and not detected in skin and small intestine. Expressed in epithelial cells of choroid plexus, ependyma, glomerulus and alveolus, in mesothelial cells and in endothelia of lymphatic vessels. Also expressed in stromal cells of peripheral lymphoid tissue and thymic epithelial cells. Detected in carcinoma cell lines and cultured fibroblasts. Expressed at higher levels in colon carcinomas than in normal colon tissue.

Its subcellular location is the membrane. It is found in the cell projection. The protein resides in the lamellipodium membrane. The protein localises to the filopodium membrane. It localises to the microvillus membrane. Its subcellular location is the ruffle membrane. It is found in the membrane raft. The protein resides in the apical cell membrane. The protein localises to the basolateral cell membrane. It localises to the invadopodium. Mediates effects on cell migration and adhesion through its different partners. During development plays a role in blood and lymphatic vessels separation by binding CLEC1B, triggering CLEC1B activation in platelets and leading to platelet activation and/or aggregation. Interaction with CD9, on the contrary, attenuates platelet aggregation and pulmonary metastasis induced by PDPN. Mediates effects on cell migration and adhesion through its different partners. Through MSN or EZR interaction promotes epithelial-mesenchymal transition (EMT) leading to ERZ phosphorylation and triggering RHOA activation leading to cell migration increase and invasiveness. Interaction with CD44 promotes directional cell migration in epithelial and tumor cells. In lymph nodes (LNs), controls fibroblastic reticular cells (FRCs) adhesion to the extracellular matrix (ECM) and contraction of the actomyosin by maintaining ERM proteins (EZR; MSN and RDX) and MYL9 activation through association with unknown transmembrane proteins. Engagement of CLEC1B by PDPN promotes FRCs relaxation by blocking lateral membrane interactions leading to reduction of ERM proteins (EZR; MSN and RDX) and MYL9 activation. Through binding with LGALS8 may participate in connection of the lymphatic endothelium to the surrounding extracellular matrix. In keratinocytes, induces changes in cell morphology showing an elongated shape, numerous membrane protrusions, major reorganization of the actin cytoskeleton, increased motility and decreased cell adhesion. Controls invadopodia stability and maturation leading to efficient degradation of the extracellular matrix (ECM) in tumor cells through modulation of RHOC activity in order to activate ROCK1/ROCK2 and LIMK1/LIMK2 and inactivation of CFL1. Required for normal lung cell proliferation and alveolus formation at birth. Does not function as a water channel or as a regulator of aquaporin-type water channels. Does not have any effect on folic acid or amino acid transport. The chain is Podoplanin from Mus musculus (Mouse).